We begin with the raw amino-acid sequence, 417 residues long: Gamma-glutamyl phosphate reductase (417 aa).

It belongs to the gamma-glutamyl phosphate reductase family.

The protein localises to the cytoplasm. The enzyme catalyses L-glutamate 5-semialdehyde + phosphate + NADP(+) = L-glutamyl 5-phosphate + NADPH + H(+). It functions in the pathway amino-acid biosynthesis; L-proline biosynthesis; L-glutamate 5-semialdehyde from L-glutamate: step 2/2. Catalyzes the NADPH-dependent reduction of L-glutamate 5-phosphate into L-glutamate 5-semialdehyde and phosphate. The product spontaneously undergoes cyclization to form 1-pyrroline-5-carboxylate. This chain is Gamma-glutamyl phosphate reductase, found in Hydrogenovibrio crunogenus (strain DSM 25203 / XCL-2) (Thiomicrospira crunogena).